A 1203-amino-acid polypeptide reads, in one-letter code: Cation-transporting ATPase catp-5 (1203 aa).

At 1–68 (MNTSEREPLL…YAYKETIGRQ (68 aa)) the chain is on the cytoplasmic side. Positions 21–42 (TTDNPSTKIMKREKDNPKAKTT) are disordered. The helical transmembrane segment at 69–89 (ILFWLLTIVTLGFYQLLAYWV) threads the bilayer. Residues 90–209 (KSLFVKVRFQ…RKIYNMNALA (120 aa)) are Extracellular-facing. Residues 210-230 (LALTPILVILFKEVLGPFYLF) form a helical membrane-spanning segment. At 231–242 (QCFSVALWYSDN) the chain is on the cytoplasmic side. Residues 243 to 263 (YAYYASVIVIITVGSAAVAVY) traverse the membrane as a helical segment. Residues 264 to 297 (QMRAQEKRIRNMVGDTISVIVRRDGHDITIDASE) are Extracellular-facing. A helical transmembrane segment spans residues 298-318 (IVPMDILILPSNTFILPCDCL). Topologically, residues 319 to 414 (LMNGTVIVNE…KPQEKEALKD (96 aa)) are cytoplasmic. A helical transmembrane segment spans residues 415–435 (VMVFILVLGFIALIGFIYTVI). At 436 to 451 (EMVSRGESLKHIIIRS) the chain is on the extracellular side. The helical transmembrane segment at 452–472 (LDIITIVVPPALPAAMSVGII) threads the bilayer. The Cytoplasmic segment spans residues 473–935 (NANSRLKKKK…KEGRCALVTS (463 aa)). Asp-503 acts as the 4-aspartylphosphate intermediate in catalysis. Residues 595 to 617 (ETQDFDTVQPTVLRPPPEQATYH) form a disordered region. Mg(2+) contacts are provided by Asp-883 and Asp-887. Residues 936–956 (YAVSKYMAAYSLNEFLSVMLL) traverse the membrane as a helical segment. The Extracellular segment spans residues 957-962 (YNDGTN). A helical transmembrane segment spans residues 963 to 983 (ISDGQFLYIDLVLITLVALFL). The Cytoplasmic segment spans residues 984–1007 (GNTEASRKLSGIPPPRRLATSAFY). The helical transmembrane segment at 1008 to 1028 (FSVFGQMFFNIITQTTGYLLV) threads the bilayer. Residues 1029–1046 (RGQSWYVPNPEELDNTTT) lie on the Extracellular side of the membrane. The chain crosses the membrane as a helical span at residues 1047 to 1067 (MIGTTVFFTSCCMYLGYAFVY). The Cytoplasmic segment spans residues 1068–1085 (SKGHPYRRSVFTNWLLCG). The chain crosses the membrane as a helical span at residues 1086–1106 (IIFVIGAINMVMIFTNMGFLM). The Extracellular portion of the chain corresponds to 1107 to 1120 (NLMGFVYVPSTSMR). The chain crosses the membrane as a helical span at residues 1121–1141 (FILLAISLAGVFLSLLYEHFF). Topologically, residues 1142 to 1203 (VEKVVAIHFE…DRKETIESKC (62 aa)) are cytoplasmic.

It belongs to the cation transport ATPase (P-type) (TC 3.A.3) family. Type V subfamily. As to expression, expressed in the 20 intestinal cells and in the excretory cell.

The protein localises to the apical cell membrane. The catalysed reaction is ATP + H2O = ADP + phosphate + H(+). Involved in the uptake and/or transport of polyamines, probably through ATP hydrolysis. This contributes to the maintenance of intracellular polyamine levels. Polyamines are essential for cell proliferation and are implicated in cellular processes, ranging from DNA replication to apoptosis. This chain is Cation-transporting ATPase catp-5, found in Caenorhabditis elegans.